A 101-amino-acid polypeptide reads, in one-letter code: A-type ATP synthase subunit K (101 aa).

3 helical membrane-spanning segments follow: residues 4–24 (ALLI…AAQA), 32–52 (FMGI…GAGV), and 75–95 (VLIF…FAVL).

This sequence belongs to the V-ATPase proteolipid subunit family. Has multiple subunits with at least A(3), B(3), C, D, E, F, H, I and proteolipid K(x).

The protein resides in the cell membrane. Its function is as follows. Component of the A-type ATP synthase that produces ATP from ADP in the presence of a proton gradient across the membrane. This Sulfolobus acidocaldarius (strain ATCC 33909 / DSM 639 / JCM 8929 / NBRC 15157 / NCIMB 11770) protein is A-type ATP synthase subunit K.